The sequence spans 576 residues: Arginine--tRNA ligase (576 aa).

The 'HIGH' region signature appears at 121-131 (PNLAKEMHVGH).

This sequence belongs to the class-I aminoacyl-tRNA synthetase family. Monomer.

The protein resides in the cytoplasm. It catalyses the reaction tRNA(Arg) + L-arginine + ATP = L-arginyl-tRNA(Arg) + AMP + diphosphate. The chain is Arginine--tRNA ligase from Alteromonas mediterranea (strain DSM 17117 / CIP 110805 / LMG 28347 / Deep ecotype).